The primary structure comprises 936 residues: MAESINSFDSKSTLQVGEKSYDYFALDAVPGMEKLPYSLKVLGENLLRNEDGKNITREHIEAIANWDPSAEPNFEIQFTPARVIMQDFTGVACIVDLATIRDAVVALGGDADDVNPLNPAEMVIDHSVIIEAFGDSDALEKNVEIEYQRNDERYKFLRWGTGAFENFRVVPPGTGIVHQVNIEYLARSVFDNNGLAYPDTCVGTDSHTTMENGLGILGWGVGGIEAEAAMLGQPISMLIPRVVGFKLTGEIPTGVTATDVVLTITDMLRQHGVVGKFVEFYGKGVGELPLANRATIGNMSPEFGSTAAMFPIDEETVKYLELTGRDQETLERVEAYAKAQGMWLDPEKEVEYSEYLELDLSTVVPSIAGPKRPQDRIELNDSKAQFRKDLHNYVEADASAVTPDFDAEGPATENTSAQTAGTPASAADAKGNIPSAAAGAEGRPSNPVTVNYNGEDIELDHGMVAIASITSCTNTSNPSVMVGAGLLARNAAAKGLKSAPWVKTSMAPGSQVVNGYYEKAGLWKDLEAMGFYLVGYGCTTCIGNSGPLPEEISAGINEGDLAATAVLSGNRNFEGRINPDVKMNYLASPILVIAYAIAGTMDFDFETQPLGQDQDGNDVFLKDIWPSTEDIEEVIASSITKDLYAEDYANVFEGDERWRSLDVPSGKTFDWDPKSTYIRKAPYFDGMSKEPEAVNDVKGARVLALLGDSVTTDHISPASTIKPGTPAAQYLDANGVERKDYNSLGARRGNHEVMVRGTFANIRLQNQLLDGVSGGYTRDFTQEGGPQSFIYDAAMNYQKENTPLVVLGGKEYGTGSSRDWAAKGTLLLGVKAVIAESFERIHRSNLIGMGVVPLQFPEGESWKSLGIEGTETFDIEGIEELNNGSTPKTVKVTATKENGEKIEFDAVTRIDTPGEADYYRNGGILQFVLRNMMSGK.

Residues 401-449 are disordered; that stretch reads VTPDFDAEGPATENTSAQTAGTPASAADAKGNIPSAAAGAEGRPSNPVT. The span at 412–422 shows a compositional bias: polar residues; sequence TENTSAQTAGT. Residues Cys472, Cys538, and Cys541 each contribute to the [4Fe-4S] cluster site.

The protein belongs to the aconitase/IPM isomerase family. In terms of assembly, monomer. [4Fe-4S] cluster serves as cofactor.

It catalyses the reaction citrate = D-threo-isocitrate. It carries out the reaction (2S,3R)-3-hydroxybutane-1,2,3-tricarboxylate = 2-methyl-cis-aconitate + H2O. Its pathway is carbohydrate metabolism; tricarboxylic acid cycle; isocitrate from oxaloacetate: step 2/2. The protein operates within organic acid metabolism; propanoate degradation. Functionally, involved in the catabolism of short chain fatty acids (SCFA) via the tricarboxylic acid (TCA)(acetyl degradation route) and probably via the 2-methylcitrate cycle I (propionate degradation route). Catalyzes the reversible isomerization of citrate to isocitrate via cis-aconitate. Could catalyze the hydration of 2-methyl-cis-aconitate to yield (2R,3S)-2-methylisocitrate. The apo form of AcnA functions as a RNA-binding regulatory protein. This chain is Aconitate hydratase A (acn), found in Corynebacterium jeikeium (strain K411).